Here is a 289-residue protein sequence, read N- to C-terminus: UPF0725 protein At1g27860 (289 aa).

The tract at residues 266–289 is disordered; that stretch reads DQQRSMTLPSGEQAESSKKRPRLS. The span at 268-279 shows a compositional bias: polar residues; it reads QRSMTLPSGEQA.

It belongs to the UPF0725 (EMB2204) family.

The polypeptide is UPF0725 protein At1g27860 (Arabidopsis thaliana (Mouse-ear cress)).